Reading from the N-terminus, the 95-residue chain is uncharacterized protein (95 aa).

Its function is as follows. The presence of the two linear plasmids, termed pGKL1 and pGKL2, in strains of Kluyveromyces lactis confers the killer phenotype to the host cell, by promoting the secretion of a toxin able to inhibit the growth of sensitive strains. This is an uncharacterized protein from Kluyveromyces lactis (strain ATCC 8585 / CBS 2359 / DSM 70799 / NBRC 1267 / NRRL Y-1140 / WM37) (Yeast).